A 105-amino-acid chain; its full sequence is Extracellular guanyl-specific ribonuclease Fl1 (105 aa).

Cystine bridges form between cysteine 5-cysteine 101 and cysteine 23-cysteine 82. Histidine 39 is an active-site residue. Glutamate 57 (proton acceptor) is an active-site residue. The active-site Proton donor is the histidine 90.

This sequence belongs to the ribonuclease N1/T1 family.

The enzyme catalyses [RNA] containing guanosine + H2O = an [RNA fragment]-3'-guanosine-3'-phosphate + a 5'-hydroxy-ribonucleotide-3'-[RNA fragment].. The sequence is that of Extracellular guanyl-specific ribonuclease Fl1 from Gibberella baccata (Fusarium lateritium).